The following is a 610-amino-acid chain: Transcription termination factor Rho (610 aa).

A disordered region spans residues Glu117–Gln227. Basic and acidic residues predominate over residues Val118–Asp131. Residues Gly178 to Gln187 are compositionally biased toward polar residues. The span at Arg189 to Gln198 shows a compositional bias: basic and acidic residues. The span at Gly199–Gly214 shows a compositional bias: basic residues. Residues Glu215 to Gln227 are compositionally biased toward basic and acidic residues. A Rho RNA-BD domain is found at Val231–Ser309. ATP is bound by residues Gly352–Ala357, Lys364–Thr369, and Arg395.

This sequence belongs to the Rho family. As to quaternary structure, homohexamer. The homohexamer assembles into an open ring structure.

Its function is as follows. Facilitates transcription termination by a mechanism that involves Rho binding to the nascent RNA, activation of Rho's RNA-dependent ATPase activity, and release of the mRNA from the DNA template. The protein is Transcription termination factor Rho of Mycobacterium leprae (strain TN).